Reading from the N-terminus, the 387-residue chain is Acyl-CoA dehydrogenase FadE29 (387 aa).

FAD contacts are provided by residues 123 to 126 (IGYT), threonine 132, and threonine 158. The Proton acceptor role is filled by glutamate 241. Position 367-369 (367-369 (VNE)) interacts with FAD.

It belongs to the acyl-CoA dehydrogenase family. Heterotetramer composed of FadE28 and FadE29. FAD is required as a cofactor.

It carries out the reaction 3-oxochol-4-en-22-oyl-CoA + A = 3-oxochola-4,17-dien-22-oyl-CoA + AH2. The protein operates within steroid metabolism; cholesterol degradation. In terms of biological role, involved in the third cycle of side chain dehydrogenation in the beta-oxidation of cholesterol catabolism. Contributes partly to the virulence by increasing the efficiency of beta-oxidation. Catalyzes the dehydrogenation of 2'-propanoyl-CoA ester side chains of 3-oxo-4-pregnene-20-carboxyl-CoA (3-OPC-CoA) to yield 3-oxo-4,17-pregnadiene-20-carboxyl-CoA (3-OPDC-CoA). Also able to dehydrogenate steroyl-CoA such as 3-oxo-chol-4-en-24-oyl-CoA (3-OCO-CoA), 1beta-(2'-propanoyl-CoA)-3a-alpha-H- 7a-beta-methylhexahydro-4-indanone (indanone-CoA ester), hexahydroindanone and pregenenone. The protein is Acyl-CoA dehydrogenase FadE29 (fadE29) of Mycobacterium tuberculosis (strain ATCC 25618 / H37Rv).